We begin with the raw amino-acid sequence, 689 residues long: Glycine--tRNA ligase beta subunit (689 aa).

The protein belongs to the class-II aminoacyl-tRNA synthetase family. Tetramer of two alpha and two beta subunits.

The protein resides in the cytoplasm. The enzyme catalyses tRNA(Gly) + glycine + ATP = glycyl-tRNA(Gly) + AMP + diphosphate. The polypeptide is Glycine--tRNA ligase beta subunit (Aeromonas hydrophila subsp. hydrophila (strain ATCC 7966 / DSM 30187 / BCRC 13018 / CCUG 14551 / JCM 1027 / KCTC 2358 / NCIMB 9240 / NCTC 8049)).